The sequence spans 563 residues: Developmental regulatory protein wetA (563 aa).

2 stretches are compositionally biased toward polar residues: residues 54–69 (EQSP…THPS) and 160–175 (HKQS…SQFQ). 6 disordered regions span residues 54–81 (EQSP…SLPP), 112–176 (ASST…QFQK), 272–318 (SNNS…PDLQ), 334–356 (PQRQ…IQNT), 430–494 (PQLH…SPKG), and 516–538 (GVAP…DRRR). Positions 272–305 (SNNSTVTSSPPSADDIFPSPHSSDPQSMSSWHSD) are enriched in low complexity. Positions 430 to 441 (PQLHPQSRSPSL) are enriched in polar residues.

The protein belongs to the wetA family.

Its function is as follows. BrlA, abaA and wetA are pivotal regulators of conidiophore development and conidium maturation. They act individually and together to regulate their own expression and that of numerous other sporulation-specific genes. In Aspergillus oryzae (strain ATCC 42149 / RIB 40) (Yellow koji mold), this protein is Developmental regulatory protein wetA.